Consider the following 166-residue polypeptide: uncharacterized protein (166 aa).

The interval Ser-28 to Lys-55 is disordered. Basic and acidic residues predominate over residues Lys-42 to Lys-55. The HTH araC/xylS-type domain occupies Gln-67 to Thr-163. DNA-binding regions (H-T-H motif) lie at residues Asp-84 to Thr-105 and Val-130 to Thr-153.

This is an uncharacterized protein from Pseudoalteromonas carrageenovora (Alteromonas carrageenovora).